The primary structure comprises 532 residues: Phosphoenolpyruvate carboxykinase (ATP) (532 aa).

Substrate is bound by residues Arg60, Tyr194, and Lys200. Residues Lys200, His219, and 237–245 contribute to the ATP site; that span reads GLSGTGKTT. Mn(2+)-binding residues include Lys200 and His219. Asp258 provides a ligand contact to Mn(2+). ATP is bound by residues Glu286, Arg324, and Thr449. Arg324 is a binding site for substrate.

The protein belongs to the phosphoenolpyruvate carboxykinase (ATP) family. Requires Mn(2+) as cofactor.

The protein resides in the cytoplasm. The catalysed reaction is oxaloacetate + ATP = phosphoenolpyruvate + ADP + CO2. Its pathway is carbohydrate biosynthesis; gluconeogenesis. In terms of biological role, involved in the gluconeogenesis. Catalyzes the conversion of oxaloacetate (OAA) to phosphoenolpyruvate (PEP) through direct phosphoryl transfer between the nucleoside triphosphate and OAA. This is Phosphoenolpyruvate carboxykinase (ATP) from Ruegeria sp. (strain TM1040) (Silicibacter sp.).